Consider the following 174-residue polypeptide: uncharacterized protein (174 aa).

This is an uncharacterized protein from Rickettsia conorii (strain ATCC VR-613 / Malish 7).